The sequence spans 390 residues: Leu/Ile/Val-binding protein homolog 6 (390 aa).

Residues 1–21 (MKKIALTALAVFSLAASAAYA) form the signal peptide.

This sequence belongs to the leucine-binding protein family.

Functionally, component of an amino-acid transport system. The protein is Leu/Ile/Val-binding protein homolog 6 of Brucella suis biovar 1 (strain 1330).